The sequence spans 287 residues: Bifunctional protein FolD (287 aa).

Residues 169-171 (GRS) and Ser194 contribute to the NADP(+) site.

It belongs to the tetrahydrofolate dehydrogenase/cyclohydrolase family. In terms of assembly, homodimer.

It catalyses the reaction (6R)-5,10-methylene-5,6,7,8-tetrahydrofolate + NADP(+) = (6R)-5,10-methenyltetrahydrofolate + NADPH. The enzyme catalyses (6R)-5,10-methenyltetrahydrofolate + H2O = (6R)-10-formyltetrahydrofolate + H(+). The protein operates within one-carbon metabolism; tetrahydrofolate interconversion. Catalyzes the oxidation of 5,10-methylenetetrahydrofolate to 5,10-methenyltetrahydrofolate and then the hydrolysis of 5,10-methenyltetrahydrofolate to 10-formyltetrahydrofolate. The sequence is that of Bifunctional protein FolD from Albidiferax ferrireducens (strain ATCC BAA-621 / DSM 15236 / T118) (Rhodoferax ferrireducens).